An 860-amino-acid chain; its full sequence is uncharacterized protein (860 aa).

2 stretches are compositionally biased toward basic and acidic residues: residues 334–345 (LEKKSLQSDSKN) and 536–551 (EDQK…LSDK). 4 disordered regions span residues 334–360 (LEKK…LRKE), 530–551 (EEDD…LSDK), 708–798 (ARKT…EDEF), and 813–842 (PFNE…RKAI). 3 stretches are compositionally biased toward acidic residues: residues 716-725 (DEEGEIDEDE), 738-750 (EMDE…DSEE), and 813-824 (PFNETDDEEEIQ). 2 positions are modified to phosphoserine: Ser744 and Ser748.

It belongs to the CBF/MAK21 family.

This is an uncharacterized protein from Schizosaccharomyces pombe (strain 972 / ATCC 24843) (Fission yeast).